Reading from the N-terminus, the 449-residue chain is Glucose-6-phosphate isomerase (449 aa).

Glutamate 291 acts as the Proton donor in catalysis. Active-site residues include histidine 312 and lysine 426.

The protein belongs to the GPI family.

The protein resides in the cytoplasm. It catalyses the reaction alpha-D-glucose 6-phosphate = beta-D-fructose 6-phosphate. Its pathway is carbohydrate biosynthesis; gluconeogenesis. The protein operates within carbohydrate degradation; glycolysis; D-glyceraldehyde 3-phosphate and glycerone phosphate from D-glucose: step 2/4. Catalyzes the reversible isomerization of glucose-6-phosphate to fructose-6-phosphate. This chain is Glucose-6-phosphate isomerase, found in Streptococcus pneumoniae serotype 19F (strain G54).